A 244-amino-acid chain; its full sequence is rRNA adenine N-6-methyltransferase (244 aa).

S-adenosyl-L-methionine-binding residues include N11, I13, G38, E59, D84, and N101.

This sequence belongs to the class I-like SAM-binding methyltransferase superfamily. rRNA adenine N(6)-methyltransferase family.

It catalyses the reaction adenosine(2085) in 23S rRNA + 2 S-adenosyl-L-methionine = N(6)-dimethyladenosine(2085) in 23S rRNA + 2 S-adenosyl-L-homocysteine + 2 H(+). This protein produces a dimethylation of the adenine residue at position 2085 in 23S rRNA, resulting in reduced affinity between ribosomes and macrolide-lincosamide-streptogramin B antibiotics. The polypeptide is rRNA adenine N-6-methyltransferase (ermC) (Staphylococcus aureus).